A 48-amino-acid polypeptide reads, in one-letter code: Large ribosomal subunit protein bL32 (48 aa).

Residues 28 to 48 (VKDKDGSWKMPHRINKTTGEY) are disordered.

Belongs to the bacterial ribosomal protein bL32 family.

The sequence is that of Large ribosomal subunit protein bL32 from Campylobacter concisus (strain 13826).